We begin with the raw amino-acid sequence, 493 residues long: Cysteine sulfinic acid decarboxylase (493 aa).

The residue at position 305 (K305) is an N6-(pyridoxal phosphate)lysine.

This sequence belongs to the group II decarboxylase family. Homodimer. Requires pyridoxal 5'-phosphate as cofactor. As to expression, expressed in liver and brain. Also expressed in both astrocytes and neurons, but lower levels are expressed in astrocytes.

It carries out the reaction L-aspartate + H(+) = beta-alanine + CO2. It catalyses the reaction 3-sulfino-L-alanine + H(+) = hypotaurine + CO2. The catalysed reaction is L-cysteate + H(+) = taurine + CO2. The protein operates within organosulfur biosynthesis; taurine biosynthesis; hypotaurine from L-cysteine: step 2/2. Its function is as follows. Catalyzes the decarboxylation of L-aspartate, 3-sulfino-L-alanine (cysteine sulfinic acid), and L-cysteate to beta-alanine, hypotaurine and taurine, respectively. The preferred substrate is 3-sulfino-L-alanine. Does not exhibit any decarboxylation activity toward glutamate. The sequence is that of Cysteine sulfinic acid decarboxylase (CSAD) from Homo sapiens (Human).